The following is a 325-amino-acid chain: Mitochondrial amidoxime-reducing component 1 (325 aa).

The Mitochondrial matrix portion of the chain corresponds to 1-16 (MDLKEAFATIFDQNRK). A helical; Signal-anchor for type II membrane protein membrane pass occupies residues 17–36 (VALYAAGTTVAVLGLGLVFK). The Cytoplasmic segment spans residues 37–325 (YMRREEKLTR…VGEPVYKITY (289 aa)). Mo-molybdopterin is bound by residues lysine 59, serine 60, and arginine 84. Positions 85-175 (HWLVITEDGH…ADKPVRLVHY (91 aa)) are MOSC N-terminal region. Residues 179 to 323 (LKPQRPHEKE…LHVGEPVYKI (145 aa)) enclose the MOSC domain. Arginine 230, arginine 264, cysteine 265, and tyrosine 305 together coordinate Mo-molybdopterin.

Mo-molybdopterin is required as a cofactor.

Its subcellular location is the mitochondrion outer membrane. The protein localises to the membrane. The enzyme catalyses N(omega)-hydroxy-L-arginine + 2 Fe(II)-[cytochrome b5] + 2 H(+) = L-arginine + 2 Fe(III)-[cytochrome b5] + H2O. In terms of biological role, catalyzes the reduction of N-oxygenated molecules, acting as a counterpart of cytochrome P450 and flavin-containing monooxygenases in metabolic cycles. As a component of prodrug-converting system, reduces a multitude of N-hydroxylated prodrugs particularly amidoximes, leading to increased drug bioavailability. May be involved in mitochondrial N(omega)-hydroxy-L-arginine (NOHA) reduction, regulating endogenous nitric oxide levels and biosynthesis. Postulated to cleave the N-OH bond of N-hydroxylated substrates in concert with electron transfer from NADH to cytochrome b5 reductase then to cytochrome b5, the ultimate electron donor that primes the active site for substrate reduction. This chain is Mitochondrial amidoxime-reducing component 1 (mtarc1), found in Danio rerio (Zebrafish).